We begin with the raw amino-acid sequence, 304 residues long: Iron(III) enterobactin esterase (304 aa).

The signal sequence occupies residues M1 to A25. Residues S182, E242, and H283 each act as charge relay system in the active site.

It belongs to the esterase D family. As to quaternary structure, monomer.

The protein localises to the periplasm. The enzyme catalyses Fe(III)-enterobactin + 3 H2O + H(+) = Fe(III)-[N-(2,3-dihydroxybenzoyl)-L-serine] + 2 N-(2,3-dihydroxybenzoyl)-L-serine. It catalyses the reaction Fe(III)-enterobactin + H2O = Fe(III)-[N-(2,3-dihydroxybenzoyl)-L-serine]3 + H(+). It carries out the reaction Fe(III)-[N-(2,3-dihydroxybenzoyl)-L-serine]3 + H2O + H(+) = Fe(III)-[N-(2,3-dihydroxybenzoyl)-L-serine]2 + N-(2,3-dihydroxybenzoyl)-L-serine. The catalysed reaction is Fe(III)-[N-(2,3-dihydroxybenzoyl)-L-serine]2 + H2O + H(+) = Fe(III)-[N-(2,3-dihydroxybenzoyl)-L-serine] + N-(2,3-dihydroxybenzoyl)-L-serine. Functionally, catalyzes the hydrolysis of ferric enterobactin (Fe-Ent). Hydrolyzes Fe-Ent into three molecules of 2,3-dihydroxybenzoylserine (DHBS) still complexed with ferric iron. Iron reduction is necessary to obtain complete release of the metal from DHBS. It can hydrolyze salmochelin S4 (diglucosyl-C-Ent) but is not involved in iron acquisition by this siderophore. The sequence is that of Iron(III) enterobactin esterase from Pseudomonas aeruginosa (strain ATCC 15692 / DSM 22644 / CIP 104116 / JCM 14847 / LMG 12228 / 1C / PRS 101 / PAO1).